Reading from the N-terminus, the 196-residue chain is MLNRQAKFERKTSETDILVEVFLDGNGKYQVATGVGFFDHMLCLFAKHGALDLTVKAAGDTHIDDHHTVEDVGITLGQSIKQALGDKQGIVRYGHALVPMDESLILVALDMSGRGHLELDLPLPAAKVGNFDTELVEEFFRALALNCGMTLHVRMLSGRNTHHIIEGAFKALGRALRQAVSKDQRLTGIPSTKGVL.

The protein belongs to the imidazoleglycerol-phosphate dehydratase family.

It is found in the cytoplasm. The catalysed reaction is D-erythro-1-(imidazol-4-yl)glycerol 3-phosphate = 3-(imidazol-4-yl)-2-oxopropyl phosphate + H2O. It participates in amino-acid biosynthesis; L-histidine biosynthesis; L-histidine from 5-phospho-alpha-D-ribose 1-diphosphate: step 6/9. The chain is Imidazoleglycerol-phosphate dehydratase from Desulforamulus reducens (strain ATCC BAA-1160 / DSM 100696 / MI-1) (Desulfotomaculum reducens).